The primary structure comprises 732 residues: DNA-directed RNA polymerase subunit beta' (732 aa).

The Zn(2+) site is built by Cys-70, Cys-72, Cys-85, and Cys-88. Residues Asp-575, Asp-577, and Asp-579 each coordinate Mg(2+).

It belongs to the RNA polymerase beta' chain family. RpoC1 subfamily. In terms of assembly, in plastids the minimal PEP RNA polymerase catalytic core is composed of four subunits: alpha, beta, beta', and beta''. When a (nuclear-encoded) sigma factor is associated with the core the holoenzyme is formed, which can initiate transcription. It depends on Mg(2+) as a cofactor. Zn(2+) is required as a cofactor.

It is found in the plastid. The protein resides in the chloroplast. It carries out the reaction RNA(n) + a ribonucleoside 5'-triphosphate = RNA(n+1) + diphosphate. DNA-dependent RNA polymerase catalyzes the transcription of DNA into RNA using the four ribonucleoside triphosphates as substrates. The chain is DNA-directed RNA polymerase subunit beta' from Thalassiosira pseudonana (Marine diatom).